The following is a 140-amino-acid chain: Ribonucleases P/MRP protein subunit POP7 (140 aa).

The interval 1–21 (MALKKNTHNKSTKRVTKHPSL) is disordered. Phosphoserine is present on Ser115.

The protein belongs to the histone-like Alba family. In terms of assembly, component of nuclear RNase P and RNase MRP complexes. RNase P consists of an RNA moiety and at least 9 protein subunits including POP1, POP3, POP4, POP5, POP6, POP7, POP8, RPP1 and RPR2. RNase MRP complex consists of an RNA moiety and at least 10 protein subunits including POP1, POP3, POP4, POP5, POP6, POP7, POP8, RMP1, RPP1 and SNM1, many of which are shared with the RNase P complex.

It is found in the nucleus. It carries out the reaction Endonucleolytic cleavage of RNA, removing 5'-extranucleotides from tRNA precursor.. Its function is as follows. Component of ribonuclease P, a protein complex that generates mature tRNA molecules by cleaving their 5'-ends. Also a component of RNase MRP, which cleaves pre-rRNA sequences. This Saccharomyces cerevisiae (strain ATCC 204508 / S288c) (Baker's yeast) protein is Ribonucleases P/MRP protein subunit POP7 (POP7).